Consider the following 461-residue polypeptide: Tubulin gamma-1 chain (461 aa).

142–148 (AGGTGSG) contributes to the GTP binding site.

Belongs to the tubulin family.

It is found in the cytoplasm. The protein localises to the cytoskeleton. The protein resides in the microtubule organizing center. Its subcellular location is the centrosome. Its function is as follows. Tubulin is the major constituent of microtubules. The gamma chain is found at microtubule organizing centers (MTOC) such as the spindle poles or the centrosome, suggesting that it is involved in the minus-end nucleation of microtubule assembly. This Euplotoides octocarinatus (Freshwater ciliate) protein is Tubulin gamma-1 chain.